We begin with the raw amino-acid sequence, 555 residues long: F-box protein COS111 (555 aa).

Disordered stretches follow at residues 31-82 (MSVS…SVSN) and 124-147 (DHSI…KQHH). A compositionally biased stretch (low complexity) spans 32–42 (SVSSRSSQEES). A compositionally biased stretch (polar residues) spans 48 to 61 (ESVSSLSMQEQQTE). A compositionally biased stretch (low complexity) spans 129–142 (SGVTRSTVSTVRPT). One can recognise an F-box domain in the interval 196–246 (HKDLNSLPHEIMSKIVSHLDQRDVTMCLYVNKNMYSTAVRQLYKEPFFSST). Positions 327–346 (SSSSLSCSRTSSNSNSSTES) are enriched in low complexity. Residues 327–354 (SSSSLSCSRTSSNSNSSTESKPVKKRRS) form a disordered region.

Its function is as follows. F-box protein probably involved in ubiquitin conjugation pathway. This is F-box protein COS111 (COS111) from Yarrowia lipolytica (strain CLIB 122 / E 150) (Yeast).